The sequence spans 219 residues: Small ribosomal subunit protein uS5 (219 aa).

Over residues 1–21 the composition is skewed to polar residues; it reads MTDQNQKANQGNGLQTTNLQA. The segment at 1 to 61 is disordered; the sequence is MTDQNQKANQ…NQNRRFQKPA (61 aa). The span at 35–47 shows a compositional bias: basic and acidic residues; the sequence is GIKKAVSKKEGGG. The S5 DRBM domain maps to 66-129; the sequence is FEERIVKLKR…KAAHNSLHTI (64 aa).

It belongs to the universal ribosomal protein uS5 family. In terms of assembly, part of the 30S ribosomal subunit. Contacts proteins S4 and S8.

With S4 and S12 plays an important role in translational accuracy. Its function is as follows. Located at the back of the 30S subunit body where it stabilizes the conformation of the head with respect to the body. The protein is Small ribosomal subunit protein uS5 of Mycoplasma pneumoniae (strain ATCC 29342 / M129 / Subtype 1) (Mycoplasmoides pneumoniae).